Consider the following 2820-residue polypeptide: Neurofibromin (2820 aa).

An N-acetylalanine modification is found at alanine 2. Phosphoserine is present on residues serine 866 and serine 878. Positions 1253–1463 (HLLYQLLWNM…DLARRFFLDI (211 aa)) constitute a Ras-GAP domain. The CRAL-TRIO domain maps to 1561 to 1719 (EKEEFKALKT…ATLALEEDLK (159 aa)). The interval 1561–1818 (EKEEFKALKT…RTRWELSQPD (258 aa)) is lipid binding. Serine 2169 and serine 2448 each carry phosphoserine. Residues 2457–2482 (YPIHHGDPSSRTLKETQPWSSPRGSE) form a disordered region. Residues 2458-2470 (PIHHGDPSSRTLK) show a composition bias toward basic and acidic residues. Threonine 2495 carries the phosphothreonine modification. Serine 2496, serine 2502, serine 2504, and serine 2524 each carry phosphoserine. The Bipartite nuclear localization signal signature appears at 2536–2552 (KRQEMESGITTPPKMRR). The residue at position 2546 (threonine 2546) is a Phosphothreonine. A phosphoserine mark is found at serine 2578, serine 2783, and serine 2798. The tract at residues 2768-2820 (TSQHSPGIDKENVELSPTTGHCNSGRTRHGSASQVQKQRSAGSFKRNSIKKIV) is disordered. Over residues 2782–2808 (LSPTTGHCNSGRTRHGSASQVQKQRSA) the composition is skewed to polar residues.

As to quaternary structure, interacts with HTR6. Interacts with SPRED2. Post-translationally, ubiquitinated by RNF7/RBX2, leading to its degradation.

The protein localises to the nucleus. Its subcellular location is the nucleolus. The protein resides in the cell membrane. Functionally, stimulates the GTPase activity of Ras. NF1 shows greater affinity for Ras GAP, but lower specific activity. May be a regulator of Ras activity. The protein is Neurofibromin (Nf1) of Rattus norvegicus (Rat).